Reading from the N-terminus, the 40-residue chain is Toxin CSTX-17 (40 aa).

Disulfide bonds link Cys2–Cys17, Cys9–Cys22, Cys16–Cys33, and Cys24–Cys31. Trp40 carries the post-translational modification Tryptophan amide.

Post-translationally, contains 4 disulfide bonds. Expressed by the venom gland.

It is found in the secreted. The protein is Toxin CSTX-17 of Cupiennius salei (American wandering spider).